The sequence spans 245 residues: 1-(5-phosphoribosyl)-5-[(5-phosphoribosylamino)methylideneamino] imidazole-4-carboxamide isomerase (245 aa).

Asp-11 acts as the Proton acceptor in catalysis. Asp-132 serves as the catalytic Proton donor.

Belongs to the HisA/HisF family.

Its subcellular location is the cytoplasm. The enzyme catalyses 1-(5-phospho-beta-D-ribosyl)-5-[(5-phospho-beta-D-ribosylamino)methylideneamino]imidazole-4-carboxamide = 5-[(5-phospho-1-deoxy-D-ribulos-1-ylimino)methylamino]-1-(5-phospho-beta-D-ribosyl)imidazole-4-carboxamide. It participates in amino-acid biosynthesis; L-histidine biosynthesis; L-histidine from 5-phospho-alpha-D-ribose 1-diphosphate: step 4/9. This chain is 1-(5-phosphoribosyl)-5-[(5-phosphoribosylamino)methylideneamino] imidazole-4-carboxamide isomerase, found in Bacillus pumilus (strain SAFR-032).